A 488-amino-acid polypeptide reads, in one-letter code: ATP synthase subunit beta (488 aa).

164–171 provides a ligand contact to ATP; sequence GGAGVGKT.

This sequence belongs to the ATPase alpha/beta chains family. F-type ATPases have 2 components, CF(1) - the catalytic core - and CF(0) - the membrane proton channel. CF(1) has five subunits: alpha(3), beta(3), gamma(1), delta(1), epsilon(1). CF(0) has four main subunits: a(1), b(1), b'(1) and c(9-12).

The protein resides in the cellular thylakoid membrane. The catalysed reaction is ATP + H2O + 4 H(+)(in) = ADP + phosphate + 5 H(+)(out). Its function is as follows. Produces ATP from ADP in the presence of a proton gradient across the membrane. The catalytic sites are hosted primarily by the beta subunits. This is ATP synthase subunit beta from Prochlorococcus marinus (strain SARG / CCMP1375 / SS120).